The chain runs to 605 residues: Putative zinc finger CCCH domain-containing protein 57 (605 aa).

3 disordered regions span residues 198-218, 238-261, and 375-403; these read RHTG…GREV, LLQD…DGEV, and QASH…YQQP. Basic and acidic residues-rich tracts occupy residues 201–218 and 238–250; these read GHES…GREV and LLQD…RADA. The segment covering 389 to 403 has biased composition (low complexity); sequence FPFQQQPQHDGYQQP. 2 consecutive C3H1-type zinc fingers follow at residues 519 to 547 and 557 to 585; these read EPKT…HSQD and KYRT…QHRL.

This Oryza sativa subsp. japonica (Rice) protein is Putative zinc finger CCCH domain-containing protein 57.